We begin with the raw amino-acid sequence, 716 residues long: Segment polarity protein dishevelled homolog DVL-3 (716 aa).

Residues 1–82 (MGETKIIYHL…RVVSWLVSAE (82 aa)) enclose the DIX domain. Residue Arg-27 is modified to Omega-N-methylarginine. A phosphoserine mark is found at Ser-48 and Ser-125. The disordered stretch occupies residues 85-235 (HPEPAPFCAD…VSRIERSSSF (151 aa)). Residues 142 to 156 (QRERPRRRDGPEHAA) are compositionally biased toward basic and acidic residues. A compositionally biased stretch (low complexity) spans 175–190 (SSSTLMSSELETTSFF). Phosphoserine is present on Ser-192. Residues 199-212 (SRFSSSTEQSSASR) show a composition bias toward low complexity. At Arg-212 the chain carries Omega-N-methylarginine. The segment covering 213-226 (LMRRHKRRRRKQKV) has biased composition (basic residues). One can recognise a PDZ domain in the interval 249-321 (TVTLNMEKYN…NDDAVRVLRE (73 aa)). Residue Arg-271 is modified to Asymmetric dimethylarginine; by PRMT1; alternate. Symmetric dimethylarginine; by PRMT7; alternate occurs at positions 271 and 342. Omega-N-methylarginine; alternate is present on Arg-342. At Thr-346 the chain carries Phosphothreonine. The DEP domain occupies 422-496 (PESGLEVRDR…SEQCYYIFGD (75 aa)). Positions 546 to 691 (PYNPHPGFPE…PPGRDLASVP (146 aa)) are disordered. Low complexity predominate over residues 565–581 (ASSQHSEGSRSSGSNRS). Basic and acidic residues-rich tracts occupy residues 582 to 595 (GSDRRKEKDPKAGD) and 604 to 622 (ESDHTTRSSLRGPRERAPS). Arg-614 is modified (symmetric dimethylarginine; by PRMT7). 2 stretches are compositionally biased toward pro residues: residues 653–663 (YGPPGVPPLYG) and 670–682 (TPPPAAMGPPGAP). A Phosphoserine modification is found at Ser-697. The residue at position 698 (Arg-698) is an Omega-N-methylarginine; alternate. Dimethylated arginine; alternate is present on Arg-698. Ser-700 is subject to Phosphoserine.

The protein belongs to the DSH family. As to quaternary structure, interacts (via the PDZ domain) with the C-terminal regions of VANGL1 and VANGL2. Interacts (via the region containing both the PDZ and DEP domains) with LRRFIP2; the DIX domain may inhibit this interaction. Interacts with CYLD. Interacts with CEP164 and DAB2. Interacts with DCDC2. Interacts with FOXK1 and FOXK2. Interacts with DAAM2. In terms of processing, ubiquitinated. Deubiquitinated by CYLD, which acts on 'Lys-63'-linked ubiquitin chains. Phosphorylated by CSNK1D. Post-translationally, arginine methylation may function as a switch in regulation of function in Wnt signaling. In terms of tissue distribution, ubiquitous.

Its subcellular location is the cytoplasm. Involved in the signal transduction pathway mediated by multiple Wnt genes. In Mus musculus (Mouse), this protein is Segment polarity protein dishevelled homolog DVL-3 (Dvl3).